A 1613-amino-acid polypeptide reads, in one-letter code: Reverse gyrase (1613 aa).

The segment at 1–38 (MIPMIYKEMCPNCNGEITSERLAIGVCEKCLKEENVFE) adopts an RG N-terminal-type zinc-finger fold. Residues Cys10, Cys13, Cys27, and Cys30 each coordinate Zn(2+). Residues Gln83 and 100–107 (VPTGVGKS) each bind ATP. Residues 87 to 291 (AKRVLKNKSF…LYRELLDFEI (205 aa)) enclose the Helicase ATP-binding domain. A DEAD box motif is present at residues 203-206 (DDVD). The Helicase C-terminal domain occupies 310 to 525 (SKEKILEYIK…IDEVNLEELI (216 aa)). The tract at residues 546 to 1613 (DLLKSVLMVV…ALHEEILSIR (1068 aa)) is topoisomerase I. The Toprim domain occupies 550 to 712 (SVLMVVESPN…NIYRVGFNEI (163 aa)). Glu556 and Asp681 together coordinate Mg(2+). Positions 733 to 1613 (DENKVKGQVV…ALHEEILSIR (881 aa)) constitute a Topo IA-type catalytic domain. The DOD-type homing endonuclease domain maps to 1070–1199 (FAGLVLGDGS…IGIYLNSIGI (130 aa)). Tyr1363 acts as the O-(5'-phospho-DNA)-tyrosine intermediate in catalysis.

In the N-terminal section; belongs to the DEAD box helicase family. DDVD subfamily. The protein in the C-terminal section; belongs to the type IA topoisomerase family. As to quaternary structure, monomer. The cofactor is Zn(2+). Mg(2+) is required as a cofactor. In terms of processing, this protein undergoes a protein self splicing that involves a post-translational excision of the intervening region (intein) followed by peptide ligation.

It is found in the cytoplasm. The catalysed reaction is ATP + H2O = ADP + phosphate + H(+). Functionally, modifies the topological state of DNA by introducing positive supercoils in an ATP-dependent process, increasing the linking number in steps of +1. Binds to single-stranded DNA, transiently cleaves and then rejoins the ends, introducing a positive supercoil in the process. The scissile phosphodiester is attacked by the catalytic tyrosine of the enzyme, resulting in the formation of a DNA-(5'-phosphotyrosyl)-enzyme intermediate. Probably involved in rewinding DNA strands in regions of the chromosome that have opened up to allow replication, transcription, DNA repair and/or for DNA protection. The protein is Reverse gyrase of Methanocaldococcus jannaschii (strain ATCC 43067 / DSM 2661 / JAL-1 / JCM 10045 / NBRC 100440) (Methanococcus jannaschii).